The following is a 316-amino-acid chain: Transaldolase (316 aa).

Residue Lys-132 is the Schiff-base intermediate with substrate of the active site.

It belongs to the transaldolase family. Type 1 subfamily. In terms of assembly, homodimer.

Its subcellular location is the cytoplasm. It carries out the reaction D-sedoheptulose 7-phosphate + D-glyceraldehyde 3-phosphate = D-erythrose 4-phosphate + beta-D-fructose 6-phosphate. It participates in carbohydrate degradation; pentose phosphate pathway; D-glyceraldehyde 3-phosphate and beta-D-fructose 6-phosphate from D-ribose 5-phosphate and D-xylulose 5-phosphate (non-oxidative stage): step 2/3. Transaldolase is important for the balance of metabolites in the pentose-phosphate pathway. This chain is Transaldolase, found in Aliivibrio fischeri (strain MJ11) (Vibrio fischeri).